The primary structure comprises 1460 residues: Venom prothrombin activator omicarin-C non-catalytic subunit (1460 aa).

Positions 1-30 (MGRYSVSPVPKCLLLMFLGWSGLKYYQVNA) are cleaved as a signal peptide. 4 Plastocyanin-like domains span residues 32 to 196 (QLRE…LLIC), 206 to 330 (AQKF…LNIK), 351 to 529 (MNWE…LLVC), and 539 to 685 (VQNK…FLDA). F5/8 type A domains are found at residues 32–330 (QLRE…LNIK) and 350–685 (IMNW…FLDA). Ca(2+) contacts are provided by Lys124, Glu139, Asp142, and Asp143. Asn156 carries an N-linked (GlcNAc...) asparagine glycan. A disulfide bond links Cys170 and Cys196. Residues Asn242, Asn300, Asn385, Asn406, and Asn471 are each glycosylated (N-linked (GlcNAc...) asparagine). A disulfide bridge links Cys251 with Cys332. Cys503 and Cys529 form a disulfide bridge. A glycan (N-linked (GlcNAc...) asparagine) is linked at Asn557. 4 cysteine pairs are disulfide-bonded: Cys672–Cys1031, Cys965–Cys991, Cys1147–Cys1298, and Cys1303–Cys1457. Residues 693–817 (GNEEEEEDDG…SDDIAGRYLR (125 aa)) are b. The tract at residues 740–760 (LLDDEDNPEQSRSEQTEDDEE) is disordered. A propeptide spans 772 to 817 (SFKGSVAEEELKHTALALEEDAHASDPRIDSNSARNSDDIAGRYLR) (activation peptide (connecting region)). Plastocyanin-like domains lie at 823-991 (NKRR…ILIC) and 1000-1143 (NRTI…FTVI). One can recognise an F5/8 type A 3 domain in the interval 823-1143 (NKRRYYIAAE…RGMQALFTVI (321 aa)). Lys919, Phe934, Asp937, and Asp938 together coordinate Ca(2+). N-linked (GlcNAc...) asparagine glycosylation is present at Asn943. 3 N-linked (GlcNAc...) asparagine glycosylation sites follow: Asn1000, Asn1180, and Asn1397. 2 consecutive F5/8 type C domains span residues 1147–1298 (CKLP…LLGC) and 1303–1457 (CSVP…LFGC).

Belongs to the multicopper oxidase family. Heterodimer of a light and a heavy chains; non-disulfide-linked. The interaction between the two chains is calcium-dependent. Found in its active form associated with omicarin-C catalytic subunit (AC Q58L95). Post-translationally, in physiological conditions, blood coagulation factor V and factor Va are inactivated by activated protein C (APC) through proteolytic degradation of the heavy chain. However, omicarin-C non-catalytic subunit (factor V-like protein) retains its full activity even at high concentration of APC. This has two explanations: this protein has only one of the three cleavage sites present in factor V that are targeted by the APC for inactivation, and the binding with the catalytic subunit protect the cleavage site from inactivation. In terms of tissue distribution, expressed by the venom gland.

The protein localises to the secreted. Snake prothrombin activator that attacks the hemostatic system of prey. This non-catalytic subunit is functionally similar to blood coagulation factor V. It serves as a critical cofactor for the prothrombinase activity of the catalytic subunit, which is similar to the blood coagulation factor X. The complex converts prothrombin to thrombin by sequential cleavage at two positions, Arg-320 followed by Arg-271. Cleavage at Arg-320 produces an active intermediate known as meizothrombin. Meizothrombin is the 'second' substrate for prothrombinase, and it docks in an altered manner to present the second cleavage site (271). Cleavage at Arg-271 releases active thrombin from its pro-fragment. This order of events is reversed if the protease component of prothrombinase is used on its own, suggesting that the 271 site is inherently more accessible to proteolysis. This chain is Venom prothrombin activator omicarin-C non-catalytic subunit, found in Oxyuranus microlepidotus (Inland taipan).